The sequence spans 820 residues: Phenylalanine--tRNA ligase beta subunit (820 aa).

In terms of domain architecture, tRNA-binding spans 39–150 (PAPVGGVLLV…GTAAPGTPLR (112 aa)). The region spanning 435-510 (EVPQTITTTG…RLHGFTELPE (76 aa)) is the B5 domain. 4 residues coordinate Mg(2+): aspartate 488, aspartate 494, glutamate 497, and glutamate 498. Positions 727-818 (SRAPAAWRDL…AVKARGWAIR (92 aa)) constitute an FDX-ACB domain.

This sequence belongs to the phenylalanyl-tRNA synthetase beta subunit family. Type 1 subfamily. As to quaternary structure, tetramer of two alpha and two beta subunits. Requires Mg(2+) as cofactor.

The protein localises to the cytoplasm. It catalyses the reaction tRNA(Phe) + L-phenylalanine + ATP = L-phenylalanyl-tRNA(Phe) + AMP + diphosphate + H(+). The polypeptide is Phenylalanine--tRNA ligase beta subunit (pheT) (Deinococcus radiodurans (strain ATCC 13939 / DSM 20539 / JCM 16871 / CCUG 27074 / LMG 4051 / NBRC 15346 / NCIMB 9279 / VKM B-1422 / R1)).